The sequence spans 37 residues: Mu-agatoxin-Aa1e (37 aa).

4 disulfides stabilise this stretch: Cys-2-Cys-18, Cys-9-Cys-23, Cys-17-Cys-33, and Cys-25-Cys-31. Asn-37 carries the asparagine amide modification.

The protein belongs to the neurotoxin 07 (Beta/delta-agtx) family. 03 (aga-4) subfamily. Aga sub-subfamily. As to expression, expressed by the venom gland.

It localises to the secreted. Functionally, insecticidal neurotoxin that induces an irreversible spastic paralysis when injected into insects. Modifies presynaptic voltage-gated sodium channels (Nav), causing them to open at the normal resting potential of the nerve. This leads to spontaneous release of neurotransmitter and repetitive action potentials in motor neurons. The chain is Mu-agatoxin-Aa1e from Agelenopsis aperta (North American funnel-web spider).